The following is a 652-amino-acid chain: DNA ligase (652 aa).

Residues 29–33 (DSQYD), 78–79 (SL), and Glu-107 each bind NAD(+). Lys-109 (N6-AMP-lysine intermediate) is an active-site residue. NAD(+)-binding residues include Arg-130, Glu-164, Lys-278, and Lys-302. Zn(2+)-binding residues include Cys-395, Cys-398, Cys-413, and Cys-418. The BRCT domain maps to 577–652 (STDAQLSGLT…IQDEDWLLNL (76 aa)).

It belongs to the NAD-dependent DNA ligase family. LigA subfamily. The cofactor is Mg(2+). Mn(2+) serves as cofactor.

The catalysed reaction is NAD(+) + (deoxyribonucleotide)n-3'-hydroxyl + 5'-phospho-(deoxyribonucleotide)m = (deoxyribonucleotide)n+m + AMP + beta-nicotinamide D-nucleotide.. In terms of biological role, DNA ligase that catalyzes the formation of phosphodiester linkages between 5'-phosphoryl and 3'-hydroxyl groups in double-stranded DNA using NAD as a coenzyme and as the energy source for the reaction. It is essential for DNA replication and repair of damaged DNA. The protein is DNA ligase of Streptococcus agalactiae serotype V (strain ATCC BAA-611 / 2603 V/R).